A 279-amino-acid chain; its full sequence is Putative pyruvate, phosphate dikinase regulatory protein (279 aa).

153-160 (GVSRTSKT) contacts ADP.

It belongs to the pyruvate, phosphate/water dikinase regulatory protein family. PDRP subfamily.

The catalysed reaction is N(tele)-phospho-L-histidyl/L-threonyl-[pyruvate, phosphate dikinase] + ADP = N(tele)-phospho-L-histidyl/O-phospho-L-threonyl-[pyruvate, phosphate dikinase] + AMP + H(+). It catalyses the reaction N(tele)-phospho-L-histidyl/O-phospho-L-threonyl-[pyruvate, phosphate dikinase] + phosphate + H(+) = N(tele)-phospho-L-histidyl/L-threonyl-[pyruvate, phosphate dikinase] + diphosphate. Its function is as follows. Bifunctional serine/threonine kinase and phosphorylase involved in the regulation of the pyruvate, phosphate dikinase (PPDK) by catalyzing its phosphorylation/dephosphorylation. The polypeptide is Putative pyruvate, phosphate dikinase regulatory protein (Rhodopseudomonas palustris (strain ATCC BAA-98 / CGA009)).